Consider the following 280-residue polypeptide: S-methyl-5'-thioadenosine phosphorylase (280 aa).

Phosphate contacts are provided by residues serine 18, 60–61, and 93–94; these read RH and TA. Position 196 (methionine 196) interacts with substrate. Threonine 197 is a binding site for phosphate. 220–222 lines the substrate pocket; it reads DYD.

This sequence belongs to the PNP/MTAP phosphorylase family. MTAP subfamily. As to quaternary structure, homotrimer.

It localises to the cytoplasm. The protein resides in the nucleus. It carries out the reaction S-methyl-5'-thioadenosine + phosphate = 5-(methylsulfanyl)-alpha-D-ribose 1-phosphate + adenine. The protein operates within amino-acid biosynthesis; L-methionine biosynthesis via salvage pathway; S-methyl-5-thio-alpha-D-ribose 1-phosphate from S-methyl-5'-thioadenosine (phosphorylase route): step 1/1. Functionally, catalyzes the reversible phosphorylation of S-methyl-5'-thioadenosine (MTA) to adenine and 5-methylthioribose-1-phosphate. Involved in the breakdown of MTA, a major by-product of polyamine biosynthesis. Responsible for the first step in the methionine salvage pathway after MTA has been generated from S-adenosylmethionine. Has broad substrate specificity with 6-aminopurine nucleosides as preferred substrates. This Ciona intestinalis (Transparent sea squirt) protein is S-methyl-5'-thioadenosine phosphorylase.